The sequence spans 352 residues: Peptide chain release factor 1 (352 aa).

The residue at position 230 (Q230) is an N5-methylglutamine.

The protein belongs to the prokaryotic/mitochondrial release factor family. Methylated by PrmC. Methylation increases the termination efficiency of RF1.

The protein localises to the cytoplasm. Its function is as follows. Peptide chain release factor 1 directs the termination of translation in response to the peptide chain termination codons UAG and UAA. The polypeptide is Peptide chain release factor 1 (Exiguobacterium sibiricum (strain DSM 17290 / CCUG 55495 / CIP 109462 / JCM 13490 / 255-15)).